A 102-amino-acid chain; its full sequence is NADH-quinone oxidoreductase subunit K (102 aa).

3 consecutive transmembrane segments (helical) span residues 6–26 (MEHG…GLMV), 30–50 (ILFV…AFVV), and 62–82 (IMFI…LAIL).

The protein belongs to the complex I subunit 4L family. NDH-1 is composed of 13 different subunits. Subunits NuoA, H, J, K, L, M, N constitute the membrane sector of the complex.

It localises to the cell inner membrane. It catalyses the reaction a quinone + NADH + 5 H(+)(in) = a quinol + NAD(+) + 4 H(+)(out). NDH-1 shuttles electrons from NADH, via FMN and iron-sulfur (Fe-S) centers, to quinones in the respiratory chain. The immediate electron acceptor for the enzyme in this species is believed to be ubiquinone. Couples the redox reaction to proton translocation (for every two electrons transferred, four hydrogen ions are translocated across the cytoplasmic membrane), and thus conserves the redox energy in a proton gradient. This is NADH-quinone oxidoreductase subunit K from Azotobacter vinelandii (strain DJ / ATCC BAA-1303).